Reading from the N-terminus, the 326-residue chain is Nicotianamine synthase 2 (326 aa).

This sequence belongs to the nicotianamine synthase (NAS)-like family. Expressed in roots.

It carries out the reaction 3 S-adenosyl-L-methionine = nicotianamine + 3 S-methyl-5'-thioadenosine + 3 H(+). Its function is as follows. Synthesizes nicotianamine, a polyamine that is the first intermediate in the synthesis of the phytosiderophores of the mugineic acid type found in gramineae which serve as a sensor for the physiological iron status within the plant, and/or might be involved in the transport of iron. In Oryza sativa subsp. indica (Rice), this protein is Nicotianamine synthase 2 (NAS2).